A 2194-amino-acid polypeptide reads, in one-letter code: Supervillin (2194 aa).

The interaction with MYLK stretch occupies residues 1-174 (MKRKERIARR…SSYSRTELSG (174 aa)). Disordered regions lie at residues 35-98 (LEED…TQSL), 118-335 (EKYG…QRRH), 388-414 (PESISEGSWVGPAPQTVTKPPPSKVLE), 450-500 (EDRG…TERM), 513-563 (AVSQ…QTSK), 589-667 (RASR…KVDE), 685-719 (KSFDEKSVPKRRSRNAAVEQRLRRLQDRSHTQPVT), and 739-791 (HPVM…DSST). Serine 50 is modified (phosphoserine). Residues 87-98 (PYSSGIMDTQSL) are compositionally biased toward polar residues. Basic and acidic residues-rich tracts occupy residues 139–161 (SRKDPEAAEKRGVRSERSAESSR) and 181–192 (ESKDYGLHRSDG). Serine 245 and serine 262 each carry phosphoserine. Basic and acidic residues-rich tracts occupy residues 283–294 (PKHEWFLQKDSE) and 308–319 (KVREKLVREESA). Over residues 320–330 (RSSPELTSESL) the composition is skewed to polar residues. Residues serine 321 and serine 322 each carry the phosphoserine modification. Residues 455 to 467 (GRSQEAPSGTEDL) are compositionally biased toward polar residues. Over residues 540–551 (PPQLQALKAKAP) the composition is skewed to low complexity. Composition is skewed to basic and acidic residues over residues 592-615 (RKPELHSRVEGSSEGPGVERERGS) and 626-635 (ENRKTSERFR). A phosphoserine mark is found at serine 652 and serine 686. The segment covering 704–714 (QRLRRLQDRSH) has biased composition (basic and acidic residues). Serine 747 and serine 781 each carry phosphoserine. Basic and acidic residues predominate over residues 770-782 (LARDQTNESKDSA). Tyrosine 829 is subject to Phosphotyrosine. Threonine 831 bears the Phosphothreonine mark. Phosphoserine is present on residues serine 893, serine 899, serine 903, serine 947, serine 979, and serine 1031. Positions 1036–1077 (EFGEPTSEQTGAAAGKPAAPTATPVSWKPQDPSEQPQEKRYQ) are disordered. Low complexity predominate over residues 1045–1059 (TGAAAGKPAAPTATP). Residues serine 1099 and serine 1205 each carry the phosphoserine modification. Threonine 1210 carries the phosphothreonine modification. Residues serine 1214, serine 1302, and serine 1385 each carry the phosphoserine modification. The interaction with NEB stretch occupies residues 1399-1667 (SNVSLRSVNL…KFLDWTELKR (269 aa)). 5 Gelsolin-like repeats span residues 1421 to 1520 (KKLM…LGGQ), 1540 to 1662 (IETN…FLDW), 1732 to 1842 (ISVD…FQGG), 1861 to 1962 (WRLY…LGRR), and 1995 to 2102 (ATEF…FPSW). The region spanning 2131–2194 (KLCKTIYPLA…VNLKKAKGLF (64 aa)) is the HP domain.

It belongs to the villin/gelsolin family. Associates with F-actin. Interacts with NEB. Interacts with MYH9. Interacts with MYLK. Interacts with TASOR. As to quaternary structure, interacts with TRIP6 and DYNLT1. Interacts with KIF14; at midbody during cytokinesis.

It localises to the cell membrane. The protein localises to the cytoplasm. Its subcellular location is the cytoskeleton. The protein resides in the cell projection. It is found in the invadopodium. It localises to the podosome. The protein localises to the midbody. Its subcellular location is the cleavage furrow. Forms a high-affinity link between the actin cytoskeleton and the membrane. Is among the first costameric proteins to assemble during myogenesis and it contributes to myogenic membrane structure and differentiation. Appears to be involved in myosin II assembly. May modulate myosin II regulation through MLCK during cell spreading, an initial step in cell migration. May play a role in invadopodial function. Its function is as follows. May be involved in modulation of focal adhesions. Supervillin-mediated down-regulation of focal adhesions involves binding to TRIP6. Plays a role in cytokinesis through KIF14 interaction. The sequence is that of Supervillin from Bos taurus (Bovine).